The chain runs to 331 residues: D-alanine--D-alanine ligase (331 aa).

The 203-residue stretch at 112–314 folds into the ATP-grasp domain; that stretch reads KRIWRSEGLP…YEDLCLRLLA (203 aa). Position 138–193 (138–193) interacts with ATP; sequence LQTLGAPMIVKPAREGSTIGLSKVHQAQQCASAYLLAARYDPEVLCEQFIAGDELT. Residues Asp267, Glu281, and Asn283 each coordinate Mg(2+).

It belongs to the D-alanine--D-alanine ligase family. The cofactor is Mg(2+). It depends on Mn(2+) as a cofactor.

It is found in the cytoplasm. The enzyme catalyses 2 D-alanine + ATP = D-alanyl-D-alanine + ADP + phosphate + H(+). Its pathway is cell wall biogenesis; peptidoglycan biosynthesis. Functionally, cell wall formation. The protein is D-alanine--D-alanine ligase of Verminephrobacter eiseniae (strain EF01-2).